The chain runs to 331 residues: MLGIWTLLPLVLTSVVRLLSKCVNAQVTDINSKGFELRKIVTTIETRNLEGLHHEGQFCRNPCPPGERKARDCTVNEDEPDCVPCQEGKEYTDKGHFSSKCRRCRLCDEGHGLEVEINCTRTQNTKCRCKPNFFCNSAVCEHCDPCTKCKHGIIEECTLTSNTKCKEEDSRSDLLWLCLLLLLIPPIVYVVIKKACRKHRKENQGPHESTTLNPETAINLSDVDLSKYITTIAGGMTLSQVRDFVRKNGVSEAKIDEIKNDNVQDTAEQKVQLLRNWYQLHEKKDACDTLIKGLKTAGLCTLAEKIHAVILKDITSDTENSNFGNEVQNLV.

An N-terminal signal peptide occupies residues 1-25 (MLGIWTLLPLVLTSVVRLLSKCVNA). At 26–171 (QVTDINSKGF…NTKCKEEDSR (146 aa)) the chain is on the extracellular side. TNFR-Cys repeat units lie at residues 47–83 (RNLE…PDCV), 84–127 (PCQE…NTKC), and 128–166 (RCKP…TKCK). Intrachain disulfides connect C59–C73, C63–C82, C85–C101, C104–C119, C107–C127, C129–C143, C146–C157, and C149–C165. Residue N118 is glycosylated (N-linked (GlcNAc...) asparagine). A helical membrane pass occupies residues 172 to 192 (SDLLWLCLLLLLIPPIVYVVI). At 193–331 (KKACRKHRKE…NFGNEVQNLV (139 aa)) the chain is on the cytoplasmic side. Residue C196 is the site of S-palmitoyl cysteine attachment. Positions 209–313 (STTLNPETAI…EKIHAVILKD (105 aa)) are interaction with HIPK3. Position 211 is a phosphothreonine (T211). A Phosphoserine modification is found at S221. The segment at 226 to 250 (SKYITTIAGGMTLSQVRDFVRKNGV) is interaction with CALM. A Death domain is found at 226–310 (SKYITTIAGG…TLAEKIHAVI (85 aa)). T318 is subject to Phosphothreonine.

Binds DAXX. Interacts with HIPK3. Part of a complex containing HIPK3 and FADD. Binds RIPK1 and FAIM2. Interacts with BABAM2 and FEM1B. Interacts with FADD. Interacts directly (via DED domain) with NOL3 (via CARD domain); inhibits death-inducing signaling complex (DISC) assembly by inhibiting the increase in FAS-FADD binding induced by FAS activation. Interacts with CALM. In the absence of stimulation, interacts with BIRC2, DDX3X and GSK3B. The interaction with BIRC2 and DDX3X is further enhanced upon receptor stimulation and accompanied by DDX3X and BIRC2 cleavage. In terms of processing, palmitoylated. Palmitoylation by ZDHHC7 prevents the lysosomal degradation of FAS regulating its expression at the plasma membrane.

Its subcellular location is the cell membrane. It is found in the membrane raft. In terms of biological role, receptor for TNFSF6/FASLG. The adapter molecule FADD recruits caspase-8 to the activated receptor. The resulting death-inducing signaling complex (DISC) performs caspase-8 proteolytic activation which initiates the subsequent cascade of caspases (aspartate-specific cysteine proteases) mediating apoptosis. FAS-mediated apoptosis may have a role in the induction of peripheral tolerance, in the antigen-stimulated suicide of mature T-cells, or both. The sequence is that of Tumor necrosis factor receptor superfamily member 6 (FAS) from Cercocebus atys (Sooty mangabey).